The following is a 466-amino-acid chain: Argininosuccinate lyase 1 (466 aa).

Belongs to the lyase 1 family. Argininosuccinate lyase subfamily.

Its subcellular location is the cytoplasm. The catalysed reaction is 2-(N(omega)-L-arginino)succinate = fumarate + L-arginine. The protein operates within amino-acid biosynthesis; L-arginine biosynthesis; L-arginine from L-ornithine and carbamoyl phosphate: step 3/3. The sequence is that of Argininosuccinate lyase 1 from Agrobacterium fabrum (strain C58 / ATCC 33970) (Agrobacterium tumefaciens (strain C58)).